We begin with the raw amino-acid sequence, 462 residues long: uncharacterized protein (462 aa).

This is an uncharacterized protein from Acanthamoeba polyphaga (Amoeba).